We begin with the raw amino-acid sequence, 98 residues long: NADH-ubiquinone oxidoreductase chain 4L (98 aa).

The next 3 helical transmembrane spans lie at 1–21 (MSLI…GLLM), 29–49 (ALLC…LTIL), and 61–81 (IILL…LVMI).

It belongs to the complex I subunit 4L family. Core subunit of respiratory chain NADH dehydrogenase (Complex I) which is composed of 45 different subunits.

Its subcellular location is the mitochondrion inner membrane. It catalyses the reaction a ubiquinone + NADH + 5 H(+)(in) = a ubiquinol + NAD(+) + 4 H(+)(out). Core subunit of the mitochondrial membrane respiratory chain NADH dehydrogenase (Complex I) which catalyzes electron transfer from NADH through the respiratory chain, using ubiquinone as an electron acceptor. Part of the enzyme membrane arm which is embedded in the lipid bilayer and involved in proton translocation. This Platanista minor (Indus river dolphin) protein is NADH-ubiquinone oxidoreductase chain 4L (MT-ND4L).